We begin with the raw amino-acid sequence, 225 residues long: Large ribosomal subunit protein bL25 (225 aa).

The segment at 206–225 (EDSKNKITKDNETNKDKSNL) is disordered.

This sequence belongs to the bacterial ribosomal protein bL25 family. CTC subfamily. Part of the 50S ribosomal subunit; part of the 5S rRNA/L5/L18/L25 subcomplex. Contacts the 5S rRNA. Binds to the 5S rRNA independently of L5 and L18.

Functionally, this is one of the proteins that binds to the 5S RNA in the ribosome where it forms part of the central protuberance. The protein is Large ribosomal subunit protein bL25 of Vesicomyosocius okutanii subsp. Calyptogena okutanii (strain HA).